The primary structure comprises 377 residues: RCC1 domain-containing protein 1 (377 aa).

The tract at residues 1-172 is interaction with KDM8; sequence MAEKRHGAWF…VRQLELGAEH (172 aa). The RCC1 1 repeat unit spans residues 6 to 57; that stretch reads HGAWFGFGFCGFGQALGSGNSHHSVYSPEPLHASDDICQVSAGWSYTALVTR. R144 carries the post-translational modification (3R)-3-hydroxyarginine. RCC1 repeat units follow at residues 179–230, 232–289, and 319–372; these read AGQV…CLSE, GDIY…IAIQ, and TGEL…VYAM.

As to quaternary structure, found in a complex with KDM8. Interacts (via N-terminus) with KDM8 (via N-terminus). In terms of processing, specifically hydroxylated (with R stereochemistry) at C-3 of ARG-141 by KDM8.

It localises to the chromosome. Plays a role in transcriptional repression of satellite repeats, possibly by regulating H3K36 methylation levels in centromeric regions together with KDM8. Possibly together with KDM8, is involved in proper mitotic spindle organization and chromosome segregation. Plays a role in regulating alpha-tubulin deacetylation and cytoskeletal microtubule stability, thereby promoting cell migration and TGF-beta-induced epithelial to mesenchymal transition (EMT), potentially through the inhibition of KDM8. The polypeptide is RCC1 domain-containing protein 1 (Rccd1) (Mus musculus (Mouse)).